Reading from the N-terminus, the 510-residue chain is MHTDLWERGCERLAAELPEQQFNTWIRPLPPADVTLAGDGVLVGLRVPNRFKLDWIRAQYGSRIEATLSELAGKPVRLELSLLPRDAVARAQGMAAAPAAQAGAAPQPTQSPMAIGAALHAAATARHDPQSVVPTPGGSANGRAAPRVGEPGGPVGTSTLPVAPTLSPAVSRGRLNPALTFDTLVPGRANQMARTAALHVVGAPGHMYNPLFIYGGVGLGKTHLIHAVGNALIRDNPDARVLYLHAEQFISDVVRNYQRKTFDELKAKYHSLDLLLIDDVQFFAGKDRTQEEFFNAFEALLAKRAHIIMTSDTYPKGLVDIDERLTSRFDAGLTVAIEPPELEMRVAILMKKSDAEGSRMPEDVAFFVAKNVRANVRELEGALRKVLAYSRFSHKEISINLAREALKDLLSIQNRQVSVENIQKTVADFYKIKIADMYSKKRPASIARPRQIAMYLAKEMTQKSLPEIGELFGGRDHTTVLHAVRKIGGERQKNTELNQQLHVLEQTLKG.

The interval Met1 to Lys74 is domain I, interacts with DnaA modulators. Positions Lys74 to Gly173 are domain II. The tract at residues Ala125–Pro168 is disordered. The tract at residues Arg174–Ser390 is domain III, AAA+ region. Positions 218, 220, 221, and 222 each coordinate ATP. Residues Arg391–Gly510 are domain IV, binds dsDNA.

It belongs to the DnaA family. Oligomerizes as a right-handed, spiral filament on DNA at oriC.

The protein localises to the cytoplasm. Plays an essential role in the initiation and regulation of chromosomal replication. ATP-DnaA binds to the origin of replication (oriC) to initiate formation of the DNA replication initiation complex once per cell cycle. Binds the DnaA box (a 9 base pair repeat at the origin) and separates the double-stranded (ds)DNA. Forms a right-handed helical filament on oriC DNA; dsDNA binds to the exterior of the filament while single-stranded (ss)DNA is stabiized in the filament's interior. The ATP-DnaA-oriC complex binds and stabilizes one strand of the AT-rich DNA unwinding element (DUE), permitting loading of DNA polymerase. After initiation quickly degrades to an ADP-DnaA complex that is not apt for DNA replication. Binds acidic phospholipids. The chain is Chromosomal replication initiator protein DnaA from Leptothrix cholodnii (strain ATCC 51168 / LMG 8142 / SP-6) (Leptothrix discophora (strain SP-6)).